Here is a 365-residue protein sequence, read N- to C-terminus: Parathion hydrolase (365 aa).

Positions 1–29 (MQTRRVVLKSAAAAGTLLGGLAGCASVAG) form a signal peptide, tat-type signal. The Zn(2+) site is built by His55, His57, Lys169, His201, His230, and Asp301. Lys169 carries the post-translational modification N6-carboxylysine.

Belongs to the metallo-dependent hydrolases superfamily. Phosphotriesterase family. In terms of assembly, homodimer. Zn(2+) is required as a cofactor. Predicted to be exported by the Tat system. The position of the signal peptide cleavage has been experimentally proven.

Its subcellular location is the cell membrane. It carries out the reaction An aryl dialkyl phosphate + H2O = dialkyl phosphate + an aryl alcohol.. Its function is as follows. Has an unusual substrate specificity for synthetic organophosphate triesters and phosphorofluoridates. All of the phosphate triesters found to be substrates are synthetic compounds. The identity of any naturally occurring substrate for the enzyme is unknown. Has no detectable activity with phosphate monoesters or diesters and no activity as an esterase or protease. It catalyzes the hydrolysis of the insecticide paraoxon at a rate approaching the diffusion limit and thus appears to be optimally evolved for utilizing this synthetic substrate. The protein is Parathion hydrolase (opd) of Brevundimonas diminuta (Pseudomonas diminuta).